Reading from the N-terminus, the 960-residue chain is Isoleucine--tRNA ligase (960 aa).

Residues Pro-60–His-70 carry the 'HIGH' region motif. Residue Glu-573 participates in L-isoleucyl-5'-AMP binding. The short motif at Lys-614–Ser-618 is the 'KMSKS' region element. Residue Lys-617 coordinates ATP. Positions 929, 932, 949, and 952 each coordinate Zn(2+).

This sequence belongs to the class-I aminoacyl-tRNA synthetase family. IleS type 1 subfamily. Monomer. It depends on Zn(2+) as a cofactor.

Its subcellular location is the cytoplasm. The catalysed reaction is tRNA(Ile) + L-isoleucine + ATP = L-isoleucyl-tRNA(Ile) + AMP + diphosphate. Catalyzes the attachment of isoleucine to tRNA(Ile). As IleRS can inadvertently accommodate and process structurally similar amino acids such as valine, to avoid such errors it has two additional distinct tRNA(Ile)-dependent editing activities. One activity is designated as 'pretransfer' editing and involves the hydrolysis of activated Val-AMP. The other activity is designated 'posttransfer' editing and involves deacylation of mischarged Val-tRNA(Ile). The protein is Isoleucine--tRNA ligase of Nostoc sp. (strain PCC 7120 / SAG 25.82 / UTEX 2576).